The primary structure comprises 196 residues: Probable GTP-binding protein EngB (196 aa).

The EngB-type G domain maps to 22-196 (NLPEIALSGR…GNWIEEKISK (175 aa)). Residues 30-37 (GRSNVGKS), 57-61 (GKTQT), 75-78 (DVPG), 142-145 (TKID), and 175-177 (FSS) contribute to the GTP site. Positions 37 and 59 each coordinate Mg(2+).

It belongs to the TRAFAC class TrmE-Era-EngA-EngB-Septin-like GTPase superfamily. EngB GTPase family. Mg(2+) serves as cofactor.

Functionally, necessary for normal cell division and for the maintenance of normal septation. The polypeptide is Probable GTP-binding protein EngB (Lactobacillus helveticus (strain DPC 4571)).